Here is a 151-residue protein sequence, read N- to C-terminus: Ribosome maturation factor RimP (151 aa).

Belongs to the RimP family.

It is found in the cytoplasm. Required for maturation of 30S ribosomal subunits. The polypeptide is Ribosome maturation factor RimP (Shewanella frigidimarina (strain NCIMB 400)).